Here is a 365-residue protein sequence, read N- to C-terminus: Eukaryotic translation initiation factor 3 subunit H (365 aa).

An MPN domain is found at 11 to 160; sequence VKVEALVVMK…LRAFRLSPKF (150 aa).

It belongs to the eIF-3 subunit H family. As to quaternary structure, component of the eukaryotic translation initiation factor 3 (eIF-3) complex.

It localises to the cytoplasm. Its function is as follows. Component of the eukaryotic translation initiation factor 3 (eIF-3) complex, which is involved in protein synthesis of a specialized repertoire of mRNAs and, together with other initiation factors, stimulates binding of mRNA and methionyl-tRNAi to the 40S ribosome. The eIF-3 complex specifically targets and initiates translation of a subset of mRNAs involved in cell proliferation. In Aspergillus clavatus (strain ATCC 1007 / CBS 513.65 / DSM 816 / NCTC 3887 / NRRL 1 / QM 1276 / 107), this protein is Eukaryotic translation initiation factor 3 subunit H.